We begin with the raw amino-acid sequence, 358 residues long: Small ribosomal subunit biogenesis GTPase RsgA 2 (358 aa).

The CP-type G domain occupies 106-261 (AEQLIAANVD…LIDTPGMREI (156 aa)). GTP contacts are provided by residues 151-154 (SKAD) and 203-211 (GSSGVGKST). The Zn(2+) site is built by Cys284, Cys289, His291, and Cys297.

The protein belongs to the TRAFAC class YlqF/YawG GTPase family. RsgA subfamily. In terms of assembly, monomer. Associates with 30S ribosomal subunit, binds 16S rRNA. It depends on Zn(2+) as a cofactor.

It is found in the cytoplasm. In terms of biological role, one of several proteins that assist in the late maturation steps of the functional core of the 30S ribosomal subunit. Helps release RbfA from mature subunits. May play a role in the assembly of ribosomal proteins into the subunit. Circularly permuted GTPase that catalyzes slow GTP hydrolysis, GTPase activity is stimulated by the 30S ribosomal subunit. The polypeptide is Small ribosomal subunit biogenesis GTPase RsgA 2 (Vibrio parahaemolyticus serotype O3:K6 (strain RIMD 2210633)).